Here is a 77-residue protein sequence, read N- to C-terminus: Large ribosomal subunit protein uL24 (77 aa).

The protein belongs to the universal ribosomal protein uL24 family. Part of the 50S ribosomal subunit.

One of two assembly initiator proteins, it binds directly to the 5'-end of the 23S rRNA, where it nucleates assembly of the 50S subunit. Functionally, one of the proteins that surrounds the polypeptide exit tunnel on the outside of the subunit. This Campylobacter fetus subsp. fetus (strain 82-40) protein is Large ribosomal subunit protein uL24.